The following is a 171-amino-acid chain: Small ribosomal subunit protein uS5 (171 aa).

Residues 13–76 enclose the S5 DRBM domain; it reads FLERLVAVNR…DQAKKNLVTI (64 aa).

This sequence belongs to the universal ribosomal protein uS5 family. As to quaternary structure, part of the 30S ribosomal subunit. Contacts proteins S4 and S8.

Functionally, with S4 and S12 plays an important role in translational accuracy. Located at the back of the 30S subunit body where it stabilizes the conformation of the head with respect to the body. The chain is Small ribosomal subunit protein uS5 from Dichelobacter nodosus (strain VCS1703A).